A 95-amino-acid polypeptide reads, in one-letter code: Aspartyl/glutamyl-tRNA(Asn/Gln) amidotransferase subunit C (95 aa).

It belongs to the GatC family. In terms of assembly, heterotrimer of A, B and C subunits.

The enzyme catalyses L-glutamyl-tRNA(Gln) + L-glutamine + ATP + H2O = L-glutaminyl-tRNA(Gln) + L-glutamate + ADP + phosphate + H(+). It catalyses the reaction L-aspartyl-tRNA(Asn) + L-glutamine + ATP + H2O = L-asparaginyl-tRNA(Asn) + L-glutamate + ADP + phosphate + 2 H(+). Functionally, allows the formation of correctly charged Asn-tRNA(Asn) or Gln-tRNA(Gln) through the transamidation of misacylated Asp-tRNA(Asn) or Glu-tRNA(Gln) in organisms which lack either or both of asparaginyl-tRNA or glutaminyl-tRNA synthetases. The reaction takes place in the presence of glutamine and ATP through an activated phospho-Asp-tRNA(Asn) or phospho-Glu-tRNA(Gln). In Geobacter sulfurreducens (strain ATCC 51573 / DSM 12127 / PCA), this protein is Aspartyl/glutamyl-tRNA(Asn/Gln) amidotransferase subunit C.